The primary structure comprises 562 residues: MANAEVSVPVGDVVVVPTEGNEGENPEDTKTQVILQLQPVQQGIYEAGSENSAAVVAVETHSIHKIEEGIDASSIEGNEDMEIAYPITCGESKAVLLWKKFVCPGINVKCVKFNDQLISPKHFVHLAGKSTLKDWKRAIRLGGIMLRKMMDSGQIDFYQHDKVCSNTCRSTKFDLLISSARAPVPGQQTSVVQTPTSADGNITQIAISEESMEEAGLEWNSALTAAVTMATEEGIKKESEEISEDTLMFWKGIADVGLMEEVVCNIQKEMEELLRGVQQRLIQAPFQVTDAAVLNNVANTFGLMDAVKRVLDNRRKQVEQGEEQFLYTLADLERQLEEQKKQAQDPRLKSQTVQNVVLMPVSTPKPPKRPRLQRPASTTVLSPSPVQQPQFTVISPITITPVGQSFSMGNIPVATLSQGSSPVTVHTLPSGPQLFRYATVVSSAKSNSPDTVTIHPSSSLALLSSTSMQDGSSLGNMATMVSPMELVAMESGLTSAIQAVESTSEDGQTIIEIDPAPDSEADDTEGKAVILETGLRTEEKVVAEMEEHQHQVHNVEIVVLED.

Ala2 bears the N-acetylalanine mark. Residues 72 to 156 enclose the SAND domain; that stretch reads ASSIEGNEDM…RKMMDSGQID (85 aa). Position 103 (Cys103) interacts with Zn(2+). Lys129, Lys133, Lys136, and Arg147 together coordinate DNA. The Zn(2+) site is built by His160, Cys164, and Cys168. Residues 311–355 are a coiled coil; it reads LDNRRKQVEQGEEQFLYTLADLERQLEEQKKQAQDPRLKSQTVQN. The tract at residues 360 to 384 is disordered; that stretch reads PVSTPKPPKRPRLQRPASTTVLSPS. Polar residues predominate over residues 375–384; sequence PASTTVLSPS.

As to quaternary structure, homodimer, and heterodimer of GMEB1 and GMEB2. Interacts with TRIM63. Interacts with the glucocorticoid receptor (NR3C1) and NCOA2/TIF2. May interact with HSP27 and CREB-binding protein (CBP). Ubiquitous. Low levels were detected in heart, brain, spleen, lung, liver, skeletal muscle, kidney and testis.

It localises to the nucleus. It is found in the cytoplasm. Trans-acting factor that binds to glucocorticoid modulatory elements (GME) present in the TAT (tyrosine aminotransferase) promoter and increases sensitivity to low concentrations of glucocorticoids. Also binds to the transferrin receptor promoter. This Mus musculus (Mouse) protein is Glucocorticoid modulatory element-binding protein 1 (Gmeb1).